The following is a 182-amino-acid chain: Pentatricopeptide repeat-containing protein At2g01360 (182 aa).

PPR repeat units follow at residues 30–64, 65–95, and 98–132; these read EKSAYLALAGNFLRSNELSKVIDVVKEMVKSQHSL, GVYHGAMLIHMLGFGRRPSLAAEALDLLPDD, and GLSAYTALMDVYISAGSPEKAMKILGEMREREIMP.

It belongs to the PPR family. P subfamily.

The polypeptide is Pentatricopeptide repeat-containing protein At2g01360 (Arabidopsis thaliana (Mouse-ear cress)).